The chain runs to 308 residues: Coenzyme PQQ synthesis protein B (308 aa).

It belongs to the PqqB family.

The protein operates within cofactor biosynthesis; pyrroloquinoline quinone biosynthesis. In terms of biological role, may be involved in the transport of PQQ or its precursor to the periplasm. This Rhodopseudomonas palustris (strain BisB5) protein is Coenzyme PQQ synthesis protein B.